The following is a 420-amino-acid chain: 26S proteasome non-ATPase regulatory subunit 4 (420 aa).

The region spanning 1 to 174 (MSQEATIIAV…TGSHLISVAP (174 aa)) is the VWFA domain. 3 UIM domains span residues 210–229 (AEDP…QRMR), 255–274 (SEEA…NNTE), and 288–307 (SEED…MGEE). The disordered stretch occupies residues 392-420 (RKAINALTKSQSQRGSKKDEKEDEDKQNS). Residues 407–420 (SKKDEKEDEDKQNS) show a composition bias toward basic and acidic residues.

This sequence belongs to the proteasome subunit S5A family. In terms of assembly, the 26S proteasome is composed of a core protease, known as the 20S proteasome, capped at one or both ends by the 19S regulatory complex (RC). The RC is composed of at least 18 different subunits in two subcomplexes, the base and the lid, which form the portions proximal and distal to the 20S proteolytic core, respectively.

In terms of biological role, binds and presumably selects ubiquitin-conjugates for destruction. In Schistosoma mansoni (Blood fluke), this protein is 26S proteasome non-ATPase regulatory subunit 4.